Consider the following 836-residue polypeptide: RNA-binding protein 12B-A (836 aa).

Positions 154–229 (PYLFLRGLPY…RFIEVMQGSE (76 aa)) constitute an RRM 1 domain. The tract at residues 237-277 (GTATEGGDTPRMRSEEHSPSRRINGRHFRKRSHSKSPRARS) is disordered. Positions 244–255 (DTPRMRSEEHSP) are enriched in basic and acidic residues. The segment covering 259–277 (INGRHFRKRSHSKSPRARS) has biased composition (basic residues). RRM domains are found at residues 283–359 (FYVH…PVSR) and 401–478 (LCIY…LISE). Disordered stretches follow at residues 539–572 (GHFKHPQGYFRQSDRRSPEDFRHSPEDYRHPWEE) and 620–644 (SQEHFRRSYQEHIRQPPEEHFRRSR). Over residues 550 to 572 (QSDRRSPEDFRHSPEDYRHPWEE) the composition is skewed to basic and acidic residues. At serine 703 the chain carries Phosphoserine. Lysine 758 is modified (N6-acetyllysine). Residues 760 to 836 (IPVKISNLPF…GPRKVKLSLL (77 aa)) enclose the RRM 4 domain.

The protein is RNA-binding protein 12B-A (Rbm12b1) of Mus musculus (Mouse).